Reading from the N-terminus, the 495-residue chain is Bifunctional protein GlmU (495 aa).

Residues 1 to 241 (MTFPGDTAVL…SALVAGVNNR (241 aa)) form a pyrophosphorylase region. Residues 12 to 15 (LAAG), K26, Q83, 88 to 89 (GT), 112 to 114 (SGD), G151, E166, N181, and N239 each bind UDP-N-acetyl-alpha-D-glucosamine. D114 lines the Mg(2+) pocket. N239 lines the Mg(2+) pocket. The segment at 242–262 (VQLAELASELNRRVVAAHQLA) is linker. An N-acetyltransferase region spans residues 263 to 495 (GVTVVDPATT…TQPPDADQTP (233 aa)). UDP-N-acetyl-alpha-D-glucosamine-binding residues include R344 and K362. Residue H374 is the Proton acceptor of the active site. Residues Y377 and N388 each contribute to the UDP-N-acetyl-alpha-D-glucosamine site. Acetyl-CoA-binding positions include A391, 397 to 398 (NY), S416, and A434. Residues 457 to 495 (IENWVQRKRPGSPAAQASKRASEMACQQPTQPPDADQTP) form a disordered region. A compositionally biased stretch (low complexity) spans 483-495 (QQPTQPPDADQTP).

It in the N-terminal section; belongs to the N-acetylglucosamine-1-phosphate uridyltransferase family. In the C-terminal section; belongs to the transferase hexapeptide repeat family. In terms of assembly, homotrimer. Mg(2+) is required as a cofactor.

It is found in the cytoplasm. It catalyses the reaction alpha-D-glucosamine 1-phosphate + acetyl-CoA = N-acetyl-alpha-D-glucosamine 1-phosphate + CoA + H(+). The catalysed reaction is N-acetyl-alpha-D-glucosamine 1-phosphate + UTP + H(+) = UDP-N-acetyl-alpha-D-glucosamine + diphosphate. Its pathway is nucleotide-sugar biosynthesis; UDP-N-acetyl-alpha-D-glucosamine biosynthesis; N-acetyl-alpha-D-glucosamine 1-phosphate from alpha-D-glucosamine 6-phosphate (route II): step 2/2. The protein operates within nucleotide-sugar biosynthesis; UDP-N-acetyl-alpha-D-glucosamine biosynthesis; UDP-N-acetyl-alpha-D-glucosamine from N-acetyl-alpha-D-glucosamine 1-phosphate: step 1/1. It functions in the pathway bacterial outer membrane biogenesis; LPS lipid A biosynthesis. Functionally, catalyzes the last two sequential reactions in the de novo biosynthetic pathway for UDP-N-acetylglucosamine (UDP-GlcNAc). The C-terminal domain catalyzes the transfer of acetyl group from acetyl coenzyme A to glucosamine-1-phosphate (GlcN-1-P) to produce N-acetylglucosamine-1-phosphate (GlcNAc-1-P), which is converted into UDP-GlcNAc by the transfer of uridine 5-monophosphate (from uridine 5-triphosphate), a reaction catalyzed by the N-terminal domain. The chain is Bifunctional protein GlmU from Mycobacterium tuberculosis (strain ATCC 25177 / H37Ra).